The following is a 314-amino-acid chain: Methenyltetrahydromethanopterin cyclohydrolase (314 aa).

The protein belongs to the MCH family.

Its subcellular location is the cytoplasm. It carries out the reaction 5,10-methenyl-5,6,7,8-tetrahydromethanopterin + H2O = N(5)-formyl-5,6,7,8-tetrahydromethanopterin + H(+). Its pathway is one-carbon metabolism; methanogenesis from CO(2); 5,10-methenyl-5,6,7,8-tetrahydromethanopterin from CO(2): step 3/3. In terms of biological role, catalyzes the reversible interconversion of 5-formyl-H(4)MPT to methenyl-H(4)MPT(+). The polypeptide is Methenyltetrahydromethanopterin cyclohydrolase (Methanocorpusculum labreanum (strain ATCC 43576 / DSM 4855 / Z)).